We begin with the raw amino-acid sequence, 373 residues long: uncharacterized protein (373 aa).

This is an uncharacterized protein from Methanocaldococcus jannaschii (strain ATCC 43067 / DSM 2661 / JAL-1 / JCM 10045 / NBRC 100440) (Methanococcus jannaschii).